Here is a 158-residue protein sequence, read N- to C-terminus: uncharacterized protein (158 aa).

A run of 2 helical transmembrane segments spans residues 10-30 and 40-60; these read LFFI…LNHF and YITF…NFFL.

Its subcellular location is the membrane. This is an uncharacterized protein from Schizosaccharomyces pombe (strain 972 / ATCC 24843) (Fission yeast).